We begin with the raw amino-acid sequence, 95 residues long: RING finger protein Z (95 aa).

Gly-2 is lipidated: N-myristoyl glycine; by host. An RING-type; atypical zinc finger spans residues 38 to 74 (CKSCWFANKGLIKCSNHYLCLKCLTAMLSRSDYCGIC). The PTAP/PSAP motif motif lies at 88-91 (PSAP).

The protein belongs to the arenaviridae Z protein family. Interacts with protein NP; this interaction probably directs the encapsidated genome to budding sites. Interacts (via RING domain) with polymerase L; this interaction inhibits viral transcription and replication, Z partially blocks the product exit tunnel for the releasing nascent RNA product. Interacts with the glycoprotein complex; this interaction plays a role in virion budding. Interacts with host eIF4E; this interaction results in eIF4E reduced affinity for its substrate, the 5'-m7 G cap structure. Interacts (via late-budding domain) with host TSG101; this interaction is essential for budding and release of viral particles. Interacts with host RPLP0; this interaction may serve to load ribosome-like particles inside the virion. Interacts with host PML; this interaction induces PML bodies redistribution in the cytoplasm upon viral infection. Myristoylation is required for the role of RING finger protein Z in assembly and budding.

It is found in the virion. The protein localises to the host cytoplasm. Its subcellular location is the host perinuclear region. The protein resides in the host cell membrane. Its function is as follows. Plays a crucial role in virion assembly and budding. Expressed late in the virus life cycle, it acts as an inhibitor of viral transcription and RNA synthesis by interacting with the viral polymerase L. Presumably recruits the NP encapsidated genome to cellular membranes at budding sites via direct interaction with NP. Plays critical roles in the final steps of viral release by interacting with host TSG101, a member of the vacuolar protein-sorting pathway and using other cellular host proteins involved in vesicle formation pathway. The budding of the virus progeny occurs after association of protein Z with the viral glycoprotein complex SSP-GP1-GP2 at the cell periphery, step that requires myristoylation of protein Z. Also selectively represses protein production by associating with host eIF4E. In cell-based minigenome assay, has an inhibitory effect on the ribonucleoprotein machinery (vRNP), which is responsible for the replication and transcription of the viral genome. This is RING finger protein Z from Bear Canyon mammarenavirus (isolate Mouse/United States/AV A0070039/2000) (BCNV).